The primary structure comprises 451 residues: Opioid growth factor receptor-like protein 1 (451 aa).

Disordered regions lie at residues 1-89 and 308-451; these read MGNL…TAKP and ENFI…VLVQ. Positions 43 to 66 are enriched in low complexity; sequence PGQESEQPAQPPEQAGGRPGASPA. A compositionally biased stretch (polar residues) spans 322–341; the sequence is GSKAQKMSSPLASSHNSQTS. Basic and acidic residues-rich tracts occupy residues 362 to 381 and 389 to 399; these read TAED…DRPS and AKPRNTEKDSN. Residues 431–443 are compositionally biased toward low complexity; sequence NDNQDNENPGNTN.

This sequence belongs to the opioid growth factor receptor family. In terms of tissue distribution, ubiquitous.

The sequence is that of Opioid growth factor receptor-like protein 1 (OGFRL1) from Homo sapiens (Human).